The sequence spans 289 residues: Putative 2-aminoethylphosphonate transport system permease protein PhnU (289 aa).

Transmembrane regions (helical) follow at residues 19–39 (WLLL…SLIV), 76–96 (FFAT…LVFI), 111–131 (FIAL…GSAG), 150–170 (FLYS…PLVM), 202–222 (VIFP…LLLT), and 254–274 (YTVA…LFSL). An ABC transmembrane type-1 domain is found at 68-275 (LLNTLQIAFF…VLSLGLFSLY (208 aa)).

Belongs to the binding-protein-dependent transport system permease family.

Its subcellular location is the cell inner membrane. Functionally, probably part of the PhnSTUV complex (TC 3.A.1.11.5) involved in 2-aminoethylphosphonate import. Probably responsible for the translocation of the substrate across the membrane. The chain is Putative 2-aminoethylphosphonate transport system permease protein PhnU (phnU) from Salmonella paratyphi A (strain ATCC 9150 / SARB42).